The following is a 461-amino-acid chain: Aldehyde dehydrogenase LUC3 (461 aa).

215-220 is an NAD(+) binding site; the sequence is GSTATG. Catalysis depends on residues Glu-237 and Cys-271.

It belongs to the aldehyde dehydrogenase family.

It carries out the reaction an aldehyde + NAD(+) + H2O = a carboxylate + NADH + 2 H(+). Its pathway is mycotoxin biosynthesis. Functionally, aldehyde dehydrogenase; part of the gene cluster that mediates the biosynthesis of the mycotoxin lucilactaene and the lucilactaene-related compound NG-391 that act as cell cycle inhibitors with potent growth inhibitory activity against malarial parasites, moderate growth inhibitory activity against cancer cells, and no activity against bacteria and fungi. LUC3 is important for lucilactaene biosynthesis and performs the oxidation of the C-20 alcoholic analog prelucilactaene G into a carboxylic derivative that has still to be identified. The pathway begins with the hybrid PKS-NRPS synthetase LUC5 which is responsible for the condensation of one acetyl-coenzyme A (CoA) unit with six malonyl-CoA units and the amide linkage of the arising heptaketide and homoserine, subsequently releasing the first intermediate prelucilactaene B. Both the cytochrome P450 monooxygenase LUC2 and the hydrolase LUC6 function in parallel in modification of prelucilactaene B. LUC6 may catalyze the 2-pyrrolidone ring formation to form prelucilactaene C from prelucilactaene B, followed by C-15 hydroxylation by the same enzyme to give prelucilactaene D, which is then converted to prelucilactaene E by epoxidation, and finally to prelucilactaene F by cyclization. Prelucilactane D, prelucilactaene E, and prelucilactaene F can be converted to dihydrolucilactaene, NG391, and lucilactaene, respectively, via C-20 methyl group hydroxylation by the cytochrome P450 monooxygenase LUC2. However, LUC2, unlike FUS8 in fusarin C biosynthesis, is not enough for the full oxidation of the C-20 methyl group into carboxylic acid, which is a prerequisite for the final methylation step. The aldehyde dehydrogenase LUC3 is involved in the biosynthesis by further oxidation of the C-20 alcoholic analog prelucilactaene G into a carboxylic derivative. This unidentified carboxylic derivative may be converted to demethyllucilactaene. As the last step, the methyltransferase LUC1 methylates the hydroxyl group at C-21 of demethyllucilactaene to generate lucilactaene. This Fusarium sp protein is Aldehyde dehydrogenase LUC3.